Consider the following 374-residue polypeptide: Flavonoid O-methyltransferase-like protein Os11g0303600 (374 aa).

Aspartate 242, aspartate 262, methionine 263, and lysine 276 together coordinate S-adenosyl-L-homocysteine. Histidine 280 (proton acceptor) is an active-site residue.

The protein belongs to the class I-like SAM-binding methyltransferase superfamily. Cation-independent O-methyltransferase family. COMT subfamily.

The chain is Flavonoid O-methyltransferase-like protein Os11g0303600 from Oryza sativa subsp. japonica (Rice).